The chain runs to 526 residues: Cytochrome P450 monooxygenase 58 (526 aa).

Transmembrane regions (helical) follow at residues 13 to 33, 115 to 135, and 306 to 326; these read IASSTIGQRILLALALGLLLI, FIMAGEILTGGMLIVFTGYGK, and IGAGAETTAASLSVFMLAMTL. Cysteine 451 serves as a coordination point for heme.

The protein belongs to the cytochrome P450 family. It depends on heme as a cofactor.

It is found in the membrane. It functions in the pathway secondary metabolite biosynthesis. Functionally, cytochrome P450 monooxygenase that is able to use delta(6)-protoilludene as a substrate to produce delta(6)-protoilludene-8-ol. In Postia placenta (strain ATCC 44394 / Madison 698-R) (Brown rot fungus), this protein is Cytochrome P450 monooxygenase 58.